We begin with the raw amino-acid sequence, 256 residues long: Sugar fermentation stimulation protein homolog (256 aa).

It belongs to the SfsA family.

This is Sugar fermentation stimulation protein homolog from Prochlorococcus marinus (strain MIT 9211).